The following is a 151-amino-acid chain: Ribosome maturation factor RimP (151 aa).

Belongs to the RimP family.

It is found in the cytoplasm. Functionally, required for maturation of 30S ribosomal subunits. This chain is Ribosome maturation factor RimP, found in Vibrio vulnificus (strain CMCP6).